The following is a 535-amino-acid chain: Nuclear/nucleolar GTPase 2 (535 aa).

Positions 1–42 (MAKKKERAVNVSGKPRHSLDVNRANDKKGAGGGAGGGGGGRS) are disordered. Basic and acidic residues predominate over residues 17–29 (HSLDVNRANDKKG). The span at 30–41 (AGGGAGGGGGGR) shows a compositional bias: gly residues. The region spanning 213 to 374 (WGELYKVIDS…LIDCPGVVYQ (162 aa)) is the CP-type G domain. Residues 261-264 (NKCD) are G4. Positions 290 to 292 (SIN) are G5. The G1 stretch occupies residues 323–330 (GYPNVGKS). The interval 349-353 (GETKV) is G2. The tract at residues 367 to 370 (DCPG) is G3. The segment at 464–494 (FFVPPPQQGEDSPSETAEPVEKSDEEGVSSD) is disordered.

Belongs to the TRAFAC class YlqF/YawG GTPase family. RsgA subfamily. In terms of assembly, interacts (via N-terminus) with the 60S ribosomal proteins RPL10A. This interaction is enhanced by the addition of GTP. In terms of tissue distribution, expressed in roots, shoot apical meristem, leaves, leaf sheaths and flowers.

Its subcellular location is the nucleus. The protein localises to the nucleolus. Its activity is regulated as follows. The GTPase activity is stimulated in the presence of ribosomes, particularly of the 60S subunit. In terms of biological role, GTPase involved in pre-60S ribosomal subunit maturation. The sequence is that of Nuclear/nucleolar GTPase 2 from Oryza sativa subsp. japonica (Rice).